The chain runs to 560 residues: Zinc finger protein 250 (560 aa).

Residues 22–93 form the KRAB domain; it reads LTFEDVAVLL…DRKGAKKSQG (72 aa). Glycyl lysine isopeptide (Lys-Gly) (interchain with G-Cter in SUMO2) cross-links involve residues Lys125, Lys136, Lys148, and Lys162. The segment at 199 to 221 adopts a C2H2-type 1 zinc-finger fold; the sequence is YMCVECGKCFGRSSHLLQHQRIH. Residue Lys225 forms a Glycyl lysine isopeptide (Lys-Gly) (interchain with G-Cter in SUMO2) linkage. C2H2-type zinc fingers lie at residues 227–249, 255–277, 283–305, 311–333, 339–361, 367–389, and 395–417; these read YVCS…RRIH, YECN…HKIH, HECL…QRIH, YVCP…QRVH, HRCN…QRIH, YTCS…HNVH, and YECS…ERIH. Residue Lys421 forms a Glycyl lysine isopeptide (Lys-Gly) (interchain with G-Cter in SUMO2) linkage. C2H2-type zinc fingers lie at residues 423-445, 451-473, 479-501, 507-529, and 535-557; these read YACY…QRVH, YVCG…ERIH, FQCT…LRTH, YECN…QRIH, and YECG…QKVH.

The protein belongs to the krueppel C2H2-type zinc-finger protein family.

The protein localises to the nucleus. May be involved in transcriptional regulation. The protein is Zinc finger protein 250 (ZNF250) of Homo sapiens (Human).